The primary structure comprises 222 residues: PKHD-type hydroxylase Syncc9902_2001 (222 aa).

One can recognise a Fe2OG dioxygenase domain in the interval 80–174 (RVHSILISRS…RLVCVGWIES (95 aa)). Residues His98, Asp100, and His155 each coordinate Fe cation. Arg165 provides a ligand contact to 2-oxoglutarate.

Fe(2+) serves as cofactor. L-ascorbate is required as a cofactor.

The chain is PKHD-type hydroxylase Syncc9902_2001 from Synechococcus sp. (strain CC9902).